We begin with the raw amino-acid sequence, 194 residues long: dCTP deaminase (194 aa).

Residues 110 to 115 (RSSLAR), D128, 136 to 138 (VLE), Y171, K178, and Q182 each bind dCTP. E138 functions as the Proton donor/acceptor in the catalytic mechanism. Positions 175 to 194 (KDAKYKNQQSAVSSRINQDD) are disordered. Residues 180-194 (KNQQSAVSSRINQDD) are compositionally biased toward polar residues.

The protein belongs to the dCTP deaminase family. Homotrimer.

The enzyme catalyses dCTP + H2O + H(+) = dUTP + NH4(+). The protein operates within pyrimidine metabolism; dUMP biosynthesis; dUMP from dCTP (dUTP route): step 1/2. In terms of biological role, catalyzes the deamination of dCTP to dUTP. This chain is dCTP deaminase, found in Actinobacillus pleuropneumoniae serotype 5b (strain L20).